A 443-amino-acid polypeptide reads, in one-letter code: Signal recognition particle 54 kDa protein (443 aa).

GTP-binding positions include 104–111, 184–188, and 242–245; these read GLQGSGKT, DTAGR, and TKLD.

This sequence belongs to the GTP-binding SRP family. SRP54 subfamily. In terms of assembly, part of the signal recognition particle protein translocation system, which is composed of SRP and FtsY. Archaeal SRP consists of a 7S RNA molecule of 300 nucleotides and two protein subunits: SRP54 and SRP19.

It is found in the cytoplasm. The enzyme catalyses GTP + H2O = GDP + phosphate + H(+). In terms of biological role, involved in targeting and insertion of nascent membrane proteins into the cytoplasmic membrane. Binds to the hydrophobic signal sequence of the ribosome-nascent chain (RNC) as it emerges from the ribosomes. The SRP-RNC complex is then targeted to the cytoplasmic membrane where it interacts with the SRP receptor FtsY. This is Signal recognition particle 54 kDa protein from Methanosarcina barkeri (strain Fusaro / DSM 804).